A 114-amino-acid chain; its full sequence is Type 4 adapter protein IcmS (114 aa).

As to quaternary structure, the T4BSS is a complex nanomachine composed of several subcomplexes. This subunit is part of the Type IV Coupling Complex (T4CC), a subcomplex composed of the DotLMNYZ core and the IcmSW-LvgA adapter subunits, linked by the C-terminal tail of DotL. Interacts with IcmW. IcmS and IcmW form a stable complex. Interacts directly with the type 4 coupling protein DotL. Interacts with LvgA. Interacts with effector proteins.

The protein resides in the cytoplasm. Interaction with DotL is critical for the export of IcmSW-dependent substrates. Functionally, component of the Dot/Icm type IVB secretion system (T4BSS), which is used to inject bacterial effector proteins into eukaryotic host cells. Part of a subcomplex which recruits effector proteins and delivers them to the core transmembrane subcomplex. The IcmS/IcmW protein complex plays an important role in protein translocation by interacting with multiple Dot/Icm effector proteins to facilitate their translocation into host cells. Interaction promotes conformational changes in the effector protein, which may facilitate display of a C-terminal translocation signal. May maintain the substrates in a translocation competent form. Required for intracellular growth in host cells, replicative phagosome formation and phagosome trafficking. IcmS is required for IcmW stability. The sequence is that of Type 4 adapter protein IcmS from Legionella pneumophila subsp. pneumophila (strain Philadelphia 1 / ATCC 33152 / DSM 7513).